We begin with the raw amino-acid sequence, 159 residues long: ATP synthase subunit b (159 aa).

Residues 4–24 form a helical membrane-spanning segment; it reads VGINGTLIVQLVTFVILVALL.

It belongs to the ATPase B chain family. In terms of assembly, F-type ATPases have 2 components, F(1) - the catalytic core - and F(0) - the membrane proton channel. F(1) has five subunits: alpha(3), beta(3), gamma(1), delta(1), epsilon(1). F(0) has three main subunits: a(1), b(2) and c(10-14). The alpha and beta chains form an alternating ring which encloses part of the gamma chain. F(1) is attached to F(0) by a central stalk formed by the gamma and epsilon chains, while a peripheral stalk is formed by the delta and b chains.

It is found in the cell inner membrane. F(1)F(0) ATP synthase produces ATP from ADP in the presence of a proton or sodium gradient. F-type ATPases consist of two structural domains, F(1) containing the extramembraneous catalytic core and F(0) containing the membrane proton channel, linked together by a central stalk and a peripheral stalk. During catalysis, ATP synthesis in the catalytic domain of F(1) is coupled via a rotary mechanism of the central stalk subunits to proton translocation. Its function is as follows. Component of the F(0) channel, it forms part of the peripheral stalk, linking F(1) to F(0). This is ATP synthase subunit b from Acidithiobacillus ferrooxidans (strain ATCC 23270 / DSM 14882 / CIP 104768 / NCIMB 8455) (Ferrobacillus ferrooxidans (strain ATCC 23270)).